The chain runs to 332 residues: Ornithine carbamoyltransferase 1, catabolic (332 aa).

Residues 56 to 59 (STRT), Gln83, Arg107, and 134 to 137 (HPTQ) each bind carbamoyl phosphate. Residues Asn167, Asp231, and 235-236 (SM) each bind L-ornithine. Residues 273 to 274 (CL) and Arg318 contribute to the carbamoyl phosphate site.

Belongs to the aspartate/ornithine carbamoyltransferase superfamily. OTCase family.

It is found in the cytoplasm. The enzyme catalyses carbamoyl phosphate + L-ornithine = L-citrulline + phosphate + H(+). It functions in the pathway amino-acid degradation; L-arginine degradation via ADI pathway; carbamoyl phosphate from L-arginine: step 2/2. In terms of biological role, reversibly catalyzes the transfer of the carbamoyl group from carbamoyl phosphate (CP) to the N(epsilon) atom of ornithine (ORN) to produce L-citrulline. The polypeptide is Ornithine carbamoyltransferase 1, catabolic (arcB1) (Streptococcus agalactiae serotype III (strain NEM316)).